A 427-amino-acid polypeptide reads, in one-letter code: Enolase (427 aa).

(2R)-2-phosphoglycerate is bound at residue glutamine 163. Glutamate 205 functions as the Proton donor in the catalytic mechanism. Residues aspartate 242, glutamate 285, and aspartate 312 each coordinate Mg(2+). The (2R)-2-phosphoglycerate site is built by lysine 337, arginine 366, serine 367, and lysine 388. Lysine 337 acts as the Proton acceptor in catalysis.

It belongs to the enolase family. It depends on Mg(2+) as a cofactor.

It is found in the cytoplasm. Its subcellular location is the secreted. The protein localises to the cell surface. The enzyme catalyses (2R)-2-phosphoglycerate = phosphoenolpyruvate + H2O. The protein operates within carbohydrate degradation; glycolysis; pyruvate from D-glyceraldehyde 3-phosphate: step 4/5. In terms of biological role, catalyzes the reversible conversion of 2-phosphoglycerate (2-PG) into phosphoenolpyruvate (PEP). It is essential for the degradation of carbohydrates via glycolysis. This Herminiimonas arsenicoxydans protein is Enolase.